Reading from the N-terminus, the 527-residue chain is AAA ATPase forming ring-shaped complexes (527 aa).

A compositionally biased stretch (low complexity) spans 1 to 18 (MVTMSSPTDSSPSNSFSD). Positions 1 to 38 (MVTMSSPTDSSPSNSFSDFNREEQSRLSDEVRQLKRTN) are disordered. Over residues 19–33 (FNREEQSRLSDEVRQ) the composition is skewed to basic and acidic residues. The stretch at 21–53 (REEQSRLSDEVRQLKRTNSDLGARNAKLAEMLK) forms a coiled coil. 257-262 (GCGKTL) lines the ATP pocket. The segment at 492–515 (DENQQSEDLPNTSNPDEWSRITGR) is disordered. Polar residues predominate over residues 497–507 (SEDLPNTSNPD).

It belongs to the AAA ATPase family. In terms of assembly, homohexamer. Assembles into a hexameric ring structure.

The chain is AAA ATPase forming ring-shaped complexes from Corynebacterium glutamicum (strain R).